The chain runs to 186 residues: MIRGLFVGRFQPVHKGHIKALEFVFSQVDEVIIGIGSAQASHTLKNPFTTGERMEMLIRAIEEAGFKKRYYLVPLPDINFNAIWVPYVESMVPKFHVVFTGNSLVAQLFRERGYKVVVQPMFRKDILSATEIRRRMIAGEPWEDLVPKSVVEYIKEIKGVERLRNLATNLESSEKELQAPIRIPEF.

Belongs to the archaeal NMN adenylyltransferase family.

It localises to the cytoplasm. The enzyme catalyses beta-nicotinamide D-ribonucleotide + ATP + H(+) = diphosphate + NAD(+). Its pathway is cofactor biosynthesis; NAD(+) biosynthesis; NAD(+) from nicotinamide D-ribonucleotide: step 1/1. The protein is Nicotinamide-nucleotide adenylyltransferase of Pyrococcus abyssi (strain GE5 / Orsay).